An 88-amino-acid chain; its full sequence is Small ribosomal subunit protein uS15 (88 aa).

Belongs to the universal ribosomal protein uS15 family. As to quaternary structure, part of the 30S ribosomal subunit. Forms a bridge to the 50S subunit in the 70S ribosome, contacting the 23S rRNA.

One of the primary rRNA binding proteins, it binds directly to 16S rRNA where it helps nucleate assembly of the platform of the 30S subunit by binding and bridging several RNA helices of the 16S rRNA. In terms of biological role, forms an intersubunit bridge (bridge B4) with the 23S rRNA of the 50S subunit in the ribosome. In Geobacter metallireducens (strain ATCC 53774 / DSM 7210 / GS-15), this protein is Small ribosomal subunit protein uS15.